A 378-amino-acid chain; its full sequence is REST corepressor 3 (378 aa).

In terms of domain architecture, ELM2 spans Met-1–Thr-83. An SANT domain is found at Pro-84 to Ser-135. A disordered region spans residues Leu-147 to Lys-219. Residues Glu-162 to Asn-184 show a composition bias toward basic and acidic residues. Residues Gln-205 to Pro-217 are compositionally biased toward basic residues. A coiled-coil region spans residues Ala-238–Gly-273. The disordered stretch occupies residues Thr-337 to Thr-356.

The protein belongs to the CoREST family.

The protein resides in the nucleus. May act as a component of a corepressor complex that represses transcription. This Gallus gallus (Chicken) protein is REST corepressor 3 (RCOR3).